We begin with the raw amino-acid sequence, 382 residues long: Deoxyuridine 5'-triphosphate nucleotidohydrolase (382 aa).

Positions 1–12 (MIKPNIPAPVRP) are enriched in pro residues. 2 disordered regions span residues 1-60 (MIKP…MMIS) and 97-118 (LLRDGPEAPPREPTPKEARRPE). Residues 100 to 118 (DGPEAPPREPTPKEARRPE) are compositionally biased toward basic and acidic residues.

The protein belongs to the dUTPase family. Mg(2+) is required as a cofactor.

The catalysed reaction is dUTP + H2O = dUMP + diphosphate + H(+). It participates in pyrimidine metabolism; dUMP biosynthesis; dUMP from dCTP (dUTP route): step 2/2. Involved in nucleotide metabolism: produces dUMP, the immediate precursor of thymidine nucleotides and decreases the intracellular concentration of dUTP to avoid uracil incorporation into viral DNA. The sequence is that of Deoxyuridine 5'-triphosphate nucleotidohydrolase from Murid herpesvirus 1 (strain Smith) (MuHV-1).